The sequence spans 936 residues: Lon protease homolog, mitochondrial (936 aa).

The N-terminal 40 residues, 1–40 (MYATRAIARRLERHAARCKGAHVARAVRGARARTTSAPRA), are a transit peptide targeting the mitochondrion. Residues 65-95 (AFVSSVDGDGSTGSTGSSSSSSSSAFGDSAS) form a disordered region. Low complexity predominate over residues 66 to 95 (FVSSVDGDGSTGSTGSSSSSSSSAFGDSAS). The Lon N-terminal domain occupies 112 to 352 (VLAVPLPRRP…ATLELLKKEV (241 aa)). 507 to 514 (GPPGVGKT) contributes to the ATP binding site. A Lon proteolytic domain is found at 748–932 (VTPPGVVTGL…DEVYRQALDW (185 aa)). Catalysis depends on residues S838 and K881.

Belongs to the peptidase S16 family. In terms of assembly, homohexamer or homoheptamer. Organized in a ring with a central cavity.

It localises to the mitochondrion matrix. The enzyme catalyses Hydrolysis of proteins in presence of ATP.. Its function is as follows. ATP-dependent serine protease that mediates the selective degradation of misfolded, unassembled or oxidatively damaged polypeptides as well as certain short-lived regulatory proteins in the mitochondrial matrix. May also have a chaperone function in the assembly of inner membrane protein complexes. Participates in the regulation of mitochondrial gene expression and in the maintenance of the integrity of the mitochondrial genome. Binds to mitochondrial DNA in a site-specific manner. The sequence is that of Lon protease homolog, mitochondrial from Ostreococcus lucimarinus (strain CCE9901).